A 119-amino-acid polypeptide reads, in one-letter code: Flagellar transcriptional regulator FlhD (119 aa).

Belongs to the FlhD family. Homodimer; disulfide-linked. Forms a heterohexamer composed of two FlhC and four FlhD subunits. Each FlhC binds a FlhD dimer, forming a heterotrimer, and a hexamer assembles by dimerization of two heterotrimers.

The protein localises to the cytoplasm. Functionally, functions in complex with FlhC as a master transcriptional regulator that regulates transcription of several flagellar and non-flagellar operons by binding to their promoter region. Activates expression of class 2 flagellar genes, including fliA, which is a flagellum-specific sigma factor that turns on the class 3 genes. Also regulates genes whose products function in a variety of physiological pathways. The polypeptide is Flagellar transcriptional regulator FlhD (Yersinia enterocolitica).